A 364-amino-acid polypeptide reads, in one-letter code: Probable dual-specificity RNA methyltransferase RlmN (364 aa).

Catalysis depends on Glu106, which acts as the Proton acceptor. The 239-residue stretch at 112–350 folds into the Radical SAM core domain; it reads YPQRNTVCIS…SCTVRDTRGR (239 aa). Cys119 and Cys356 are disulfide-bonded. [4Fe-4S] cluster is bound by residues Cys126, Cys130, and Cys133. S-adenosyl-L-methionine-binding positions include 177–178, Ser211, 234–236, and Asn313; these read GE and SLH. Cys356 (S-methylcysteine intermediate) is an active-site residue.

Belongs to the radical SAM superfamily. RlmN family. It depends on [4Fe-4S] cluster as a cofactor.

It localises to the cytoplasm. The catalysed reaction is adenosine(2503) in 23S rRNA + 2 reduced [2Fe-2S]-[ferredoxin] + 2 S-adenosyl-L-methionine = 2-methyladenosine(2503) in 23S rRNA + 5'-deoxyadenosine + L-methionine + 2 oxidized [2Fe-2S]-[ferredoxin] + S-adenosyl-L-homocysteine. It catalyses the reaction adenosine(37) in tRNA + 2 reduced [2Fe-2S]-[ferredoxin] + 2 S-adenosyl-L-methionine = 2-methyladenosine(37) in tRNA + 5'-deoxyadenosine + L-methionine + 2 oxidized [2Fe-2S]-[ferredoxin] + S-adenosyl-L-homocysteine. In terms of biological role, specifically methylates position 2 of adenine 2503 in 23S rRNA and position 2 of adenine 37 in tRNAs. The chain is Probable dual-specificity RNA methyltransferase RlmN from Mycobacterium marinum (strain ATCC BAA-535 / M).